The chain runs to 369 residues: Protein RIC-3 (369 aa).

The N-terminal stretch at 1-28 is a signal peptide; the sequence is MAYSTVQRVALASGLVLALSLLLPKAFL. Residues 29 to 95 lie on the Lumenal side of the membrane; that stretch reads SRGKRQEPPP…AGGGGSGRGL (67 aa). Residues 30–67 are disordered; the sequence is RGKRQEPPPTPEGKLGRFPPMMHHHQAPSDGQTPGARF. A helical transmembrane segment spans residues 96–116; the sequence is MGQIIPIYGFGIFLYILYILF. At 117–369 the chain is on the cytoplasmic side; that stretch reads KLSKGKTTAE…LRKRNPQGLE (253 aa). Residues 140–169 adopt a coiled-coil conformation; sequence RKITSFELAQLQEKLKETEAAMEKLINRVG. At lysine 202 the chain carries N6-acetyllysine; alternate. Lysine 202 is covalently cross-linked (Glycyl lysine isopeptide (Lys-Gly) (interchain with G-Cter in ubiquitin); alternate). 2 disordered regions span residues 272 to 295 and 316 to 369; these read ESDH…SVTS and LAEN…QGLE. Basic and acidic residues predominate over residues 332-346; the sequence is ETTKEEWSQDFKDEG. Positions 360–369 are enriched in basic residues; sequence LRKRNPQGLE.

This sequence belongs to the ric-3 family. As to quaternary structure, monomer and homodimer. Interacts with CHRNA7, CHRNA3, CHRNA4, CHRNB2, CHRNB4 and HTR3A. In terms of tissue distribution, broadly expressed, with high levels in muscle, brain, heart, pancreas and testis. In the central nervous system, highest levels are detected in the cerebellum and pituitary gland. Over-expressed in brains from patients with bipolar disease or schizophrenia. Isoform 5 is predominantly expressed in the brain.

It localises to the endoplasmic reticulum membrane. The protein localises to the golgi apparatus membrane. Molecular chaperone which facilitates proper subunit assembly and surface trafficking of alpha-7 (CHRNA7) and alpha-8 (CHRNA8) nicotinic acetylcholine receptors. May also promote functional expression of homomeric serotoninergic 5-HT3 receptors, and of heteromeric acetylcholine receptors alpha-3/beta-2, alpha-3/beta-4, alpha-4/beta-2 and alpha-4/beta-4. This chain is Protein RIC-3 (RIC3), found in Homo sapiens (Human).